The sequence spans 190 residues: Potassium-transporting ATPase KdpC subunit (190 aa).

A helical transmembrane segment spans residues Thr-10–Gly-30.

Belongs to the KdpC family. In terms of assembly, the system is composed of three essential subunits: KdpA, KdpB and KdpC.

The protein resides in the cell inner membrane. Functionally, part of the high-affinity ATP-driven potassium transport (or Kdp) system, which catalyzes the hydrolysis of ATP coupled with the electrogenic transport of potassium into the cytoplasm. This subunit acts as a catalytic chaperone that increases the ATP-binding affinity of the ATP-hydrolyzing subunit KdpB by the formation of a transient KdpB/KdpC/ATP ternary complex. This chain is Potassium-transporting ATPase KdpC subunit, found in Escherichia coli O9:H4 (strain HS).